Reading from the N-terminus, the 331-residue chain is Adenosine deaminase (331 aa).

2 residues coordinate Zn(2+): histidine 12 and histidine 14. Residues histidine 14, aspartate 16, and glycine 170 each contribute to the substrate site. Zn(2+) is bound at residue histidine 197. Glutamate 200 (proton donor) is an active-site residue. Aspartate 278 is a binding site for Zn(2+). Aspartate 279 contacts substrate.

The protein belongs to the metallo-dependent hydrolases superfamily. Adenosine and AMP deaminases family. Adenosine deaminase subfamily. Requires Zn(2+) as cofactor.

It carries out the reaction adenosine + H2O + H(+) = inosine + NH4(+). The enzyme catalyses 2'-deoxyadenosine + H2O + H(+) = 2'-deoxyinosine + NH4(+). Its function is as follows. Catalyzes the hydrolytic deamination of adenosine and 2-deoxyadenosine. This is Adenosine deaminase from Shewanella sp. (strain ANA-3).